Consider the following 190-residue polypeptide: GTP cyclohydrolase 1 (190 aa).

Zn(2+) contacts are provided by cysteine 79, histidine 82, and cysteine 151.

This sequence belongs to the GTP cyclohydrolase I family. As to quaternary structure, toroid-shaped homodecamer, composed of two pentamers of five dimers.

It carries out the reaction GTP + H2O = 7,8-dihydroneopterin 3'-triphosphate + formate + H(+). It functions in the pathway cofactor biosynthesis; 7,8-dihydroneopterin triphosphate biosynthesis; 7,8-dihydroneopterin triphosphate from GTP: step 1/1. This is GTP cyclohydrolase 1 from Clostridioides difficile (strain 630) (Peptoclostridium difficile).